Here is a 152-residue protein sequence, read N- to C-terminus: Interleukin-3 (152 aa).

The N-terminal stretch at 1–19 (MSCLPVLLLLQLLVSPGLQ) is a signal peptide. N34 and N89 each carry an N-linked (GlcNAc...) asparagine glycan. A disulfide bridge connects residues C35 and C103.

The protein belongs to the IL-3 family. As to quaternary structure, monomer. As to expression, activated T-cells, mast cells, natural killer cells.

The protein resides in the secreted. Its function is as follows. Granulocyte/macrophage colony-stimulating factors are cytokines that act in hematopoiesis by controlling the production, differentiation, and function of 2 related white cell populations of the blood, the granulocytes and the monocytes-macrophages. This CSF induces granulocytes, macrophages, mast cells, stem cells, erythroid cells, eosinophils and megakaryocytes. In Hylobates lar (Lar gibbon), this protein is Interleukin-3 (IL3).